The primary structure comprises 729 residues: MPKNSKVVKRELDDEVIESVKDLLSNEDSADDAFKKSELIVDVPEEKDTDVVERSEVKDARPAWNSKLQYILAQVGFSVGLGNVWRFPYLCQKNGGGAYLLPYLILLLVIGIPLFFLELSVGQRIRRGSIGVWNYISPQLGGIGFASCVVCFFVALYYNVIIGWSLFYFSQSFQQPLPWDQCPLVKNASHTFVEPECEKSSATTYYWYREALNISTSISESGGLNWKMTICLLAAWVVVCLAMIKGIQSSGKIMYFSSLFPYVVLICFLIRALLLNGSVDGIRHMFTPELEIMLEPKVWREAAAQVFFALGLGFGGVIAFSSYNKRDNNCHFDAVLVSFINFFTSILATLVVFAVLGFKANVINEKCIAENSEMIIKLVKMGNISQDIIPHHINFSAITAEDYDLIYDIIQKVKEEEFPALHLNACQIEDELNKAVQGTGLAFIAFTEAMTHFPASPFWSVMFFLMLVNLGLGSMFGTIEGIITPVVDTFKVRKEILTVICCLLAFCIGLIFVQRSGNYFVTMFDDYSATLPLLIVVILENIAVSFVYGIDKFMEDLKDMLGFTPNRYYYYMWKYISPLMLLSLLIASIVNMGLSPPGYNAWMEDKASEKFLSYPTWGMVICISLMVLAILPIPVVFIIRRCNLIDDSSGNLASVTYKRGRVLKEPVNLEGDDASLIHGKISSEMSSPNFGKNIYRKQSGSPTLDTAPNGRYGIGYLMADMPDMPESDL.

Topologically, residues M1 to Q69 are cytoplasmic. Residues S25 and S55 each carry the phosphoserine modification. 3 consecutive transmembrane segments (helical) span residues Y70–L90, A98–L117, and G142–I162. Topologically, residues G163–N225 are extracellular. Residues N187 and N213 are each glycosylated (N-linked (GlcNAc...) asparagine). The next 4 helical transmembrane spans lie at W226–I244, I253–I270, V306–Y323, and V335–L356. The Extracellular segment spans residues G357 to H452. 2 N-linked (GlcNAc...) asparagine glycosylation sites follow: N383 and N394. Helical transmembrane passes span F453–L472, I496–Q514, T530–I550, Y571–M592, and V620–C642. The Cytoplasmic segment spans residues N643 to L729. S687, S699, and S701 each carry phosphoserine.

Belongs to the sodium:neurotransmitter symporter (SNF) (TC 2.A.22) family. SLC6A15 subfamily.

The protein localises to the membrane. The enzyme catalyses L-leucine(in) + Na(+)(in) = L-leucine(out) + Na(+)(out). It carries out the reaction L-isoleucine(in) + Na(+)(in) = L-isoleucine(out) + Na(+)(out). It catalyses the reaction L-methionine(in) + Na(+)(in) = L-methionine(out) + Na(+)(out). The catalysed reaction is L-proline(in) + Na(+)(in) = L-proline(out) + Na(+)(out). The enzyme catalyses L-alanine(in) + Na(+)(in) = L-alanine(out) + Na(+)(out). It carries out the reaction L-asparagine(in) + Na(+)(in) = L-asparagine(out) + Na(+)(out). It catalyses the reaction L-valine(in) + Na(+)(in) = L-valine(out) + Na(+)(out). The catalysed reaction is L-cysteine(in) + Na(+)(in) = L-cysteine(out) + Na(+)(out). The enzyme catalyses L-glutamine(in) + Na(+)(in) = L-glutamine(out) + Na(+)(out). It carries out the reaction L-serine(in) + Na(+)(in) = L-serine(out) + Na(+)(out). It catalyses the reaction L-threonine(in) + Na(+)(in) = L-threonine(out) + Na(+)(out). The catalysed reaction is L-pipecolate(in) + Na(+)(in) = L-pipecolate(out) + Na(+)(out). The enzyme catalyses L-phenylalanine(in) + Na(+)(in) = L-phenylalanine(out) + Na(+)(out). Its function is as follows. Functions as a sodium-dependent neutral amino acid transporter. Exhibits preference for the branched-chain amino acids, particularly leucine, valine and isoleucine and methionine. Can also transport low-affinity substrates such as alanine, phenylalanine, glutamine and pipecolic acid. Mediates the saturable, pH-sensitive and electrogenic cotransport of proline and sodium ions with a stoichiometry of 1:1. May have a role as transporter for neurotransmitter precursors into neurons. In contrast to other members of the neurotransmitter transporter family, does not appear to be chloride-dependent. This Bos taurus (Bovine) protein is Sodium-dependent neutral amino acid transporter B(0)AT2 (SLC6A15).